The sequence spans 96 residues: Exodeoxyribonuclease 7 small subunit (96 aa).

Over residues 61–79 (ALTKDESQKTNKTGFRTES) the composition is skewed to basic and acidic residues. Residues 61 to 96 (ALTKDESQKTNKTGFRTESKSTSQTSSDSVLEEDLF) are disordered. Over residues 80 to 89 (KSTSQTSSDS) the composition is skewed to low complexity.

The protein belongs to the XseB family. As to quaternary structure, heterooligomer composed of large and small subunits.

The protein resides in the cytoplasm. It catalyses the reaction Exonucleolytic cleavage in either 5'- to 3'- or 3'- to 5'-direction to yield nucleoside 5'-phosphates.. In terms of biological role, bidirectionally degrades single-stranded DNA into large acid-insoluble oligonucleotides, which are then degraded further into small acid-soluble oligonucleotides. The sequence is that of Exodeoxyribonuclease 7 small subunit from Leptospira borgpetersenii serovar Hardjo-bovis (strain JB197).